Consider the following 218-residue polypeptide: MKFFIDTANLNEIREAQELGILDGVTTNPSLMAKEGISGKDNVFKHYKAICDIVDGDVSAEVIATDYKGIIEEGEELITIDPKIVVKVPMIKDGIKAIKYFSQKGIRTNCTLVFSAGQALLAAKAGATYVSPFIGRLDDISQDGMELIAQIVGIYRNYDYQTEVLAASVRHTMHLINCAEVGADVVTCPLNVITGLLNHPLTDSGLAKFLADHKKVNG.

The active-site Schiff-base intermediate with substrate is Lys87.

It belongs to the transaldolase family. Type 3B subfamily.

It is found in the cytoplasm. It catalyses the reaction D-sedoheptulose 7-phosphate + D-glyceraldehyde 3-phosphate = D-erythrose 4-phosphate + beta-D-fructose 6-phosphate. It participates in carbohydrate degradation; pentose phosphate pathway; D-glyceraldehyde 3-phosphate and beta-D-fructose 6-phosphate from D-ribose 5-phosphate and D-xylulose 5-phosphate (non-oxidative stage): step 2/3. In terms of biological role, transaldolase is important for the balance of metabolites in the pentose-phosphate pathway. This chain is Probable transaldolase, found in Cytophaga hutchinsonii (strain ATCC 33406 / DSM 1761 / CIP 103989 / NBRC 15051 / NCIMB 9469 / D465).